A 358-amino-acid polypeptide reads, in one-letter code: Extracellular phospholipase C (358 aa).

The protein resides in the secreted. The chain is Extracellular phospholipase C (plcA) from Dickeya chrysanthemi (Pectobacterium chrysanthemi).